We begin with the raw amino-acid sequence, 116 residues long: uncharacterized protein (116 aa).

A helical membrane pass occupies residues 89–109; it reads VGFVILILLYILTNPNAIELI.

This sequence belongs to the M.jannaschii MJ0023/MJ0349/MJ1072/MJ1074/MJ1107/MJECL16 family.

It is found in the membrane. This is an uncharacterized protein from Methanocaldococcus jannaschii (strain ATCC 43067 / DSM 2661 / JAL-1 / JCM 10045 / NBRC 100440) (Methanococcus jannaschii).